Reading from the N-terminus, the 1094-residue chain is Transport and Golgi organization protein 6 homolog (1094 aa).

The chain crosses the membrane as a helical span at residues 468-488 (LTVLMDSLLPVLGVLFLLYCF). Ser-556 carries the post-translational modification Phosphoserine. A compositionally biased stretch (basic and acidic residues) spans 777–795 (EEQQQTSHERPTDVAHSHL). A disordered region spans residues 777–834 (EEQQQTSHERPTDVAHSHLEQQQSHETAPQTGLQSNAPIIPQGVNEPSTTTSQKSGSV). 2 stretches are compositionally biased toward polar residues: residues 796-813 (EQQQ…QSNA) and 821-834 (NEPS…SGSV). 2 HEAT repeats span residues 873-909 (LEMQ…SDVY) and 952-988 (SKYR…CQRL).

It belongs to the Tango6 family.

It is found in the membrane. The sequence is that of Transport and Golgi organization protein 6 homolog (TANGO6) from Homo sapiens (Human).